We begin with the raw amino-acid sequence, 198 residues long: Protein GrpE (198 aa).

Positions 1-21 (MMKKAEDPLQDREGTIQEHTE) are enriched in basic and acidic residues. Residues 1 to 56 (MMKKAEDPLQDREGTIQEHTEGQAGTAAADQSAAVETPESRIAGLEREVQAEKEQN) are disordered. Positions 22–34 (GQAGTAAADQSAA) are enriched in low complexity. Over residues 44–56 (GLEREVQAEKEQN) the composition is skewed to basic and acidic residues.

Belongs to the GrpE family. As to quaternary structure, homodimer.

The protein resides in the cytoplasm. In terms of biological role, participates actively in the response to hyperosmotic and heat shock by preventing the aggregation of stress-denatured proteins, in association with DnaK and GrpE. It is the nucleotide exchange factor for DnaK and may function as a thermosensor. Unfolded proteins bind initially to DnaJ; upon interaction with the DnaJ-bound protein, DnaK hydrolyzes its bound ATP, resulting in the formation of a stable complex. GrpE releases ADP from DnaK; ATP binding to DnaK triggers the release of the substrate protein, thus completing the reaction cycle. Several rounds of ATP-dependent interactions between DnaJ, DnaK and GrpE are required for fully efficient folding. This is Protein GrpE from Chlorobium luteolum (strain DSM 273 / BCRC 81028 / 2530) (Pelodictyon luteolum).